A 347-amino-acid chain; its full sequence is F-box protein At2g14500 (347 aa).

An F-box domain is found at 6 to 52 (PLTLSELPHDLLRNIFNRLSFADFHRATWNSISKQTAPPKTKSPWLI).

The polypeptide is F-box protein At2g14500 (Arabidopsis thaliana (Mouse-ear cress)).